The sequence spans 51 residues: Insulin (51 aa).

Cystine bridges form between cysteine 7–cysteine 37, cysteine 19–cysteine 50, and cysteine 36–cysteine 41.

It belongs to the insulin family. As to quaternary structure, heterodimer of a B chain and an A chain linked by two disulfide bonds.

Its subcellular location is the secreted. Its function is as follows. Insulin decreases blood glucose concentration. It increases cell permeability to monosaccharides, amino acids and fatty acids. It accelerates glycolysis, the pentose phosphate cycle, and glycogen synthesis in liver. The protein is Insulin (INS) of Elephas maximus (Indian elephant).